The chain runs to 102 residues: Circadian clock protein KaiB3 (102 aa).

This sequence belongs to the KaiB family. Purifies as a monomer and homotetramer. Interacts with KaiC1 and KaiC3.

A paralog of KaiB1, the major clock oscillator protein in this species. KaiB3 and KaiC3 may cross talk with the core oscillator. The monomer reduces the ATPase activity of KaiC3 by 55%, the homotetramer has no effect. Its function is as follows. A metamorphic protein which may reversibly switch between an inactive tetrameric fold and a rare thioredoxin-like monomeric fold (KaiB(fs)). The sequence is that of Circadian clock protein KaiB3 from Synechocystis sp. (strain ATCC 27184 / PCC 6803 / Kazusa).